We begin with the raw amino-acid sequence, 588 residues long: Putative ABC transporter ATP-binding protein PAM_020 (588 aa).

ABC transporter domains follow at residues 6 to 247 (IIFK…GIQE) and 317 to 551 (LQLQ…TSLN). Residues 40-47 (GKNGSGKS) and 351-358 (GKNGSGKS) each bind ATP.

Belongs to the ABC transporter superfamily.

Its subcellular location is the cell membrane. Its function is as follows. Probably part of an ABC transporter complex. Responsible for energy coupling to the transport system. In Onion yellows phytoplasma (strain OY-M), this protein is Putative ABC transporter ATP-binding protein PAM_020.